We begin with the raw amino-acid sequence, 491 residues long: G2/mitotic-specific cyclin-2 (491 aa).

Residue serine 2 is modified to N-acetylserine. Disordered regions lie at residues 59–107 (EGSR…DPSS) and 164–184 (HPAR…SGKK). Polar residues predominate over residues 67-77 (TRESVSRSTAA).

Belongs to the cyclin family. Cyclin AB subfamily. In terms of assembly, interacts with NAP1.

In terms of biological role, essential for the control of the cell cycle at the G2/M (mitosis) transition. Interacts with the CDC2 protein kinase to form MPF. G2/M cyclins accumulate steadily during G2 and are abruptly destroyed at mitosis. The chain is G2/mitotic-specific cyclin-2 (CLB2) from Saccharomyces cerevisiae (strain ATCC 204508 / S288c) (Baker's yeast).